The chain runs to 323 residues: Thymidylate synthase (323 aa).

DUMP is bound by residues arginine 21 and 172–173 (RR). Catalysis depends on cysteine 192, which acts as the Nucleophile. Residues 214–217 (RSND), asparagine 225, and 255–257 (HVY) contribute to the dUMP site. Aspartate 217 serves as a coordination point for (6R)-5,10-methylene-5,6,7,8-tetrahydrofolate. Alanine 322 lines the (6R)-5,10-methylene-5,6,7,8-tetrahydrofolate pocket.

Belongs to the thymidylate synthase family. Bacterial-type ThyA subfamily. In terms of assembly, homodimer.

The protein localises to the cytoplasm. The catalysed reaction is dUMP + (6R)-5,10-methylene-5,6,7,8-tetrahydrofolate = 7,8-dihydrofolate + dTMP. It functions in the pathway pyrimidine metabolism; dTTP biosynthesis. In terms of biological role, catalyzes the reductive methylation of 2'-deoxyuridine-5'-monophosphate (dUMP) to 2'-deoxythymidine-5'-monophosphate (dTMP) while utilizing 5,10-methylenetetrahydrofolate (mTHF) as the methyl donor and reductant in the reaction, yielding dihydrofolate (DHF) as a by-product. This enzymatic reaction provides an intracellular de novo source of dTMP, an essential precursor for DNA biosynthesis. The protein is Thymidylate synthase of Bordetella parapertussis (strain 12822 / ATCC BAA-587 / NCTC 13253).